Here is a 416-residue protein sequence, read N- to C-terminus: Multifunctional CCA protein (416 aa).

ATP-binding residues include Gly8 and Arg11. Residues Gly8 and Arg11 each coordinate CTP. Mg(2+) contacts are provided by Asp21 and Asp23. ATP contacts are provided by Arg91, Arg137, and Arg140. Residues Arg91, Arg137, and Arg140 each contribute to the CTP site. An HD domain is found at 228–329 (TGVHTLMVLA…VKIFDKADFW (102 aa)).

This sequence belongs to the tRNA nucleotidyltransferase/poly(A) polymerase family. Bacterial CCA-adding enzyme type 1 subfamily. As to quaternary structure, monomer. Can also form homodimers and oligomers. The cofactor is Mg(2+). Requires Ni(2+) as cofactor.

It catalyses the reaction a tRNA precursor + 2 CTP + ATP = a tRNA with a 3' CCA end + 3 diphosphate. The catalysed reaction is a tRNA with a 3' CCA end + 2 CTP + ATP = a tRNA with a 3' CCACCA end + 3 diphosphate. Its function is as follows. Catalyzes the addition and repair of the essential 3'-terminal CCA sequence in tRNAs without using a nucleic acid template. Adds these three nucleotides in the order of C, C, and A to the tRNA nucleotide-73, using CTP and ATP as substrates and producing inorganic pyrophosphate. tRNA 3'-terminal CCA addition is required both for tRNA processing and repair. Also involved in tRNA surveillance by mediating tandem CCA addition to generate a CCACCA at the 3' terminus of unstable tRNAs. While stable tRNAs receive only 3'-terminal CCA, unstable tRNAs are marked with CCACCA and rapidly degraded. This chain is Multifunctional CCA protein, found in Shewanella baltica (strain OS195).